A 75-amino-acid chain; its full sequence is Large ribosomal subunit protein bL28c (75 aa).

The protein belongs to the bacterial ribosomal protein bL28 family.

It localises to the plastid. The protein resides in the chloroplast. In Cyanidioschyzon merolae (strain NIES-3377 / 10D) (Unicellular red alga), this protein is Large ribosomal subunit protein bL28c.